The primary structure comprises 266 residues: Glucosamine-6-phosphate deaminase (266 aa).

The active-site Proton acceptor; for enolization step is the D72. Catalysis depends on D141, which acts as the For ring-opening step. H143 serves as the catalytic Proton acceptor; for ring-opening step. Residue E148 is the For ring-opening step of the active site.

This sequence belongs to the glucosamine/galactosamine-6-phosphate isomerase family. NagB subfamily. As to quaternary structure, homohexamer.

It carries out the reaction alpha-D-glucosamine 6-phosphate + H2O = beta-D-fructose 6-phosphate + NH4(+). The protein operates within amino-sugar metabolism; N-acetylneuraminate degradation; D-fructose 6-phosphate from N-acetylneuraminate: step 5/5. Its activity is regulated as follows. Allosterically activated by N-acetylglucosamine 6-phosphate (GlcNAc6P). Functionally, catalyzes the reversible isomerization-deamination of glucosamine 6-phosphate (GlcN6P) to form fructose 6-phosphate (Fru6P) and ammonium ion. This is Glucosamine-6-phosphate deaminase from Enterobacter sp. (strain 638).